Reading from the N-terminus, the 115-residue chain is NADH-ubiquinone oxidoreductase chain 3 (115 aa).

Transmembrane regions (helical) follow at residues 3–23 (LFVALFINASLSFILISVAFW), 55–75 (FFLVAITFLLFDLEIALLLPL), and 84–104 (LSAMMITSFILISILALGLIY).

It belongs to the complex I subunit 3 family. As to quaternary structure, core subunit of respiratory chain NADH dehydrogenase (Complex I) which is composed of 45 different subunits. Interacts with TMEM186. Interacts with TMEM242.

The protein localises to the mitochondrion inner membrane. The catalysed reaction is a ubiquinone + NADH + 5 H(+)(in) = a ubiquinol + NAD(+) + 4 H(+)(out). Core subunit of the mitochondrial membrane respiratory chain NADH dehydrogenase (Complex I) which catalyzes electron transfer from NADH through the respiratory chain, using ubiquinone as an electron acceptor. Essential for the catalytic activity of complex I. This chain is NADH-ubiquinone oxidoreductase chain 3, found in Sigmodon hispidus (Hispid cotton rat).